The primary structure comprises 213 residues: GTP-binding protein yptV4 (213 aa).

13–21 (GDTGVGKSC) contributes to the GTP binding site. An Effector region motif is present at residues 35-43 (HDLTIGVEF). GTP-binding positions include 61 to 65 (DTAGQ), 119 to 122 (NKCD), and 149 to 151 (SAR). The tract at residues 194 to 213 (AGPQAAKPGEGDARKSSSCC) is disordered. Residues 202–213 (GEGDARKSSSCC) are compositionally biased toward basic and acidic residues. 2 S-geranylgeranyl cysteine lipidation sites follow: Cys212 and Cys213.

This sequence belongs to the small GTPase superfamily. Rab family.

Its subcellular location is the cell membrane. Functionally, protein transport. Probably involved in vesicular traffic. This Volvox carteri (Green alga) protein is GTP-binding protein yptV4 (YPTV4).